A 141-amino-acid polypeptide reads, in one-letter code: Ribonuclease VapC38 (141 aa).

2 residues coordinate Mg(2+): Asp5 and Asp102.

It belongs to the PINc/VapC protein family. The cofactor is Mg(2+).

The protein localises to the secreted. In terms of biological role, toxic component of a type II toxin-antitoxin (TA) system. An RNase. Its cognate antitoxin is VapB38. The polypeptide is Ribonuclease VapC38 (Mycobacterium tuberculosis (strain ATCC 25618 / H37Rv)).